The chain runs to 276 residues: Omega-amidase NIT2 (276 aa).

Residues 4–248 (FRLALIQLQI…EAIVYSDIDL (245 aa)) form the CN hydrolase domain. At Ser26 the chain carries Phosphoserine. Glu43 acts as the Proton acceptor in catalysis. Lys68 carries the post-translational modification N6-acetyllysine; alternate. Lys68 is modified (N6-succinyllysine; alternate). Lys112 functions as the Proton donor in the catalytic mechanism. N6-succinyllysine is present on residues Lys123 and Lys130. The active-site Nucleophile is Cys153.

In terms of assembly, homodimer. Detected in fetal brain (at protein level). Ubiquitous. Detected in heart, brain, placenta, lung, liver, skeletal muscle, kidney, pancreas, prostate, spleen, thymus, prostate, testis, ovary, small intestine and colon.

Its subcellular location is the cytoplasm. It catalyses the reaction a monoamide of a dicarboxylate + H2O = a dicarboxylate + NH4(+). It carries out the reaction 2-oxoglutaramate + H2O = 2-oxoglutarate + NH4(+). The enzyme catalyses 2-oxosuccinamate + H2O = oxaloacetate + NH4(+). In terms of biological role, has omega-amidase activity. The role of omega-amidase is to remove potentially toxic intermediates by converting 2-oxoglutaramate and 2-oxosuccinamate to biologically useful 2-oxoglutarate and oxaloacetate, respectively. The chain is Omega-amidase NIT2 (NIT2) from Homo sapiens (Human).